The primary structure comprises 79 residues: Small ribosomal subunit protein bS18 (79 aa).

The protein belongs to the bacterial ribosomal protein bS18 family. In terms of assembly, part of the 30S ribosomal subunit. Forms a tight heterodimer with protein bS6.

Binds as a heterodimer with protein bS6 to the central domain of the 16S rRNA, where it helps stabilize the platform of the 30S subunit. This is Small ribosomal subunit protein bS18 from Aster yellows witches'-broom phytoplasma (strain AYWB).